Here is a 370-residue protein sequence, read N- to C-terminus: tRNA N6-adenosine threonylcarbamoyltransferase (370 aa).

Positions 122 and 126 each coordinate Fe cation. Substrate-binding positions include 153-157 (LLSGG), D186, G199, and N298. D326 is a binding site for Fe cation.

The protein belongs to the KAE1 / TsaD family. It depends on Fe(2+) as a cofactor.

It is found in the cytoplasm. It carries out the reaction L-threonylcarbamoyladenylate + adenosine(37) in tRNA = N(6)-L-threonylcarbamoyladenosine(37) in tRNA + AMP + H(+). In terms of biological role, required for the formation of a threonylcarbamoyl group on adenosine at position 37 (t(6)A37) in tRNAs that read codons beginning with adenine. Is involved in the transfer of the threonylcarbamoyl moiety of threonylcarbamoyl-AMP (TC-AMP) to the N6 group of A37, together with TsaE and TsaB. TsaD likely plays a direct catalytic role in this reaction. The polypeptide is tRNA N6-adenosine threonylcarbamoyltransferase (Granulibacter bethesdensis (strain ATCC BAA-1260 / CGDNIH1)).